The primary structure comprises 131 residues: Profilin-2 (131 aa).

This sequence belongs to the profilin family. In terms of assembly, occurs in many kinds of cells as a complex with monomeric actin in a 1:1 ratio.

The protein resides in the cytoplasm. The protein localises to the cytoskeleton. Its function is as follows. Binds to actin and affects the structure of the cytoskeleton. At high concentrations, profilin prevents the polymerization of actin, whereas it enhances it at low concentrations. By binding to PIP2, it inhibits the formation of IP3 and DG. This chain is Profilin-2 (PRO2), found in Triticum aestivum (Wheat).